The chain runs to 209 residues: Octanoyltransferase (209 aa).

The BPL/LPL catalytic domain maps to Asn28 to Leu203. Residues Arg66–His73, Ala133–Gly135, and Gly146–Ala148 contribute to the substrate site. Cys164 functions as the Acyl-thioester intermediate in the catalytic mechanism.

It belongs to the LipB family.

Its subcellular location is the cytoplasm. It carries out the reaction octanoyl-[ACP] + L-lysyl-[protein] = N(6)-octanoyl-L-lysyl-[protein] + holo-[ACP] + H(+). The protein operates within protein modification; protein lipoylation via endogenous pathway; protein N(6)-(lipoyl)lysine from octanoyl-[acyl-carrier-protein]: step 1/2. Its function is as follows. Catalyzes the transfer of endogenously produced octanoic acid from octanoyl-acyl-carrier-protein onto the lipoyl domains of lipoate-dependent enzymes. Lipoyl-ACP can also act as a substrate although octanoyl-ACP is likely to be the physiological substrate. This is Octanoyltransferase from Pelobacter propionicus (strain DSM 2379 / NBRC 103807 / OttBd1).